The sequence spans 344 residues: 2,3,4,5-tetrahydropyridine-2,6-dicarboxylate N-succinyltransferase (344 aa).

Glutamate 205 is a Mg(2+) binding site. The Acyl-anhydride intermediate role is filled by glutamate 221. Succinyl-CoA-binding positions include arginine 223, glycine 238, serine 241, alanine 264, 279 to 280 (EA), glycine 287, lysine 304, and 317 to 320 (RRNS).

Belongs to the type 2 tetrahydrodipicolinate N-succinyltransferase family. Homotrimer.

The protein localises to the cytoplasm. It catalyses the reaction (S)-2,3,4,5-tetrahydrodipicolinate + succinyl-CoA + H2O = (S)-2-succinylamino-6-oxoheptanedioate + CoA. The protein operates within amino-acid biosynthesis; L-lysine biosynthesis via DAP pathway; LL-2,6-diaminopimelate from (S)-tetrahydrodipicolinate (succinylase route): step 1/3. In terms of biological role, catalyzes the conversion of the cyclic tetrahydrodipicolinate (THDP) into the acyclic N-succinyl-L-2-amino-6-oxopimelate using succinyl-CoA. The sequence is that of 2,3,4,5-tetrahydropyridine-2,6-dicarboxylate N-succinyltransferase from Pseudomonas paraeruginosa (strain DSM 24068 / PA7) (Pseudomonas aeruginosa (strain PA7)).